Reading from the N-terminus, the 511-residue chain is NADH-quinone oxidoreductase subunit N 1 (511 aa).

The next 14 membrane-spanning stretches (helical) occupy residues 15 to 35, 46 to 66, 89 to 109, 120 to 140, 142 to 162, 177 to 197, 221 to 241, 264 to 284, 289 to 309, 317 to 337, 347 to 367, 393 to 413, 426 to 446, and 471 to 491; these read LALPMLVLSGFAVAILLLDLV, ALALAGLAAATMSLAKVWQAV, FAIYFYLLFIVGAAVAILMSI, GEYHALILFATIGMMCMASGM, LILLFVGLELMALSTYVLVGF, LLLGAFSSGIFAYGLSLFYGL, PIALLALITTATGLLFKIAAV, VAVKAAGWAMLLRIFLFMLWP, YTPILIFVAVATMIGGNFAAL, LLAYSSISHVGYMLLGLVASD, GILVYLAVYTFMNLGAFAVIT, AVLLLVFLLSLAGIPPLAGFW, GHYTLAVVAVLFAVLGMYYYL, and AALWISALGTLGIGLFPEVFL.

It belongs to the complex I subunit 2 family. NDH-1 is composed of 14 different subunits. Subunits NuoA, H, J, K, L, M, N constitute the membrane sector of the complex.

It is found in the cell inner membrane. It catalyses the reaction a quinone + NADH + 5 H(+)(in) = a quinol + NAD(+) + 4 H(+)(out). In terms of biological role, NDH-1 shuttles electrons from NADH, via FMN and iron-sulfur (Fe-S) centers, to quinones in the respiratory chain. The immediate electron acceptor for the enzyme in this species is believed to be ubiquinone. Couples the redox reaction to proton translocation (for every two electrons transferred, four hydrogen ions are translocated across the cytoplasmic membrane), and thus conserves the redox energy in a proton gradient. This is NADH-quinone oxidoreductase subunit N 1 from Koribacter versatilis (strain Ellin345).